Here is a 141-residue protein sequence, read N- to C-terminus: Protein MGF 100-2L (141 aa).

This sequence belongs to the asfivirus MGF 100 family.

Functionally, plays a role in virus cell tropism, and may be required for efficient virus replication in macrophages. This chain is Protein MGF 100-2L, found in African swine fever virus (isolate Pig/Kenya/KEN-50/1950) (ASFV).